We begin with the raw amino-acid sequence, 107 residues long: DNA polymerase delta subunit 4 (107 aa).

The PCNA-interaction protein motif (PIP box) signature appears at 1–16 (MGRKRLITDSYPVVKR). Residues 1–35 (MGRKRLITDSYPVVKRREGSAGHSKGELAPDLGEE) form a disordered region. Residues 15 to 28 (KRREGSAGHSKGEL) are compositionally biased toward basic and acidic residues.

It belongs to the DNA polymerase delta subunit 4 family. Component of the tetrameric DNA polymerase delta complex (Pol-delta4), which consists of POLD1/p125, POLD2/p50, POLD3/p66/p68 and POLD4/p12, with POLD1 bearing DNA polymerase and 3' to 5' proofreading exonuclease activities. Within this complex, directly interacts with POLD1 and POLD2. Directly interacts with PCNA, as do POLD1 and POLD3; this interaction stimulates Pol-delta4 polymerase activity. As POLD1 and POLD2, directly interacts with WRNIP1; this interaction stimulates DNA polymerase delta-mediated DNA synthesis, independently of the presence of PCNA, possibly by increasing initiation frequency. Upon genotoxic stress induced by DNA damaging agents or by replication stress, POLD4 is proteolytically degraded and Pol-delta4 is converted into a trimeric form of the complex (Pol-delta3) that has an increased proofreading activity. The DNA polymerase delta complex interacts with POLDIP2; this interaction is probably mediated through direct binding to POLD2. Post-translationally, ubiquitinated; undergoes 'Lys-48'-linked ubiquitination in response to UV irradiation, leading to proteasomal degradation. This modification is partly mediated by RNF8 and by the DCX(DTL) E3 ubiquitin ligase complex (also called CRL4(CDT2)). Efficient degradation requires the presence of PCNA and is required for the inhibition of fork progression after DNA damage.

It is found in the nucleus. As a component of the tetrameric DNA polymerase delta 4 complex (Pol-delta4), plays a role in high fidelity genome replication and repair. Within this complex, increases the rate of DNA synthesis and decreases fidelity by regulating POLD1 polymerase and proofreading 3' to 5' exonuclease activity. Pol-delta4 participates in Okazaki fragment processing, through both the short flap pathway, as well as a nick translation system. Under conditions of DNA replication stress, required for the repair of broken replication forks through break-induced replication (BIR), a mechanism that may induce segmental genomic duplications of up to 200 kb. Involved in Pol-delta4 translesion synthesis (TLS) of templates carrying O6-methylguanine or abasic sites. Its degradation in response to DNA damage is required for the inhibition of fork progression and cell survival. The sequence is that of DNA polymerase delta subunit 4 (POLD4) from Bos taurus (Bovine).